Here is a 134-residue protein sequence, read N- to C-terminus: Large-conductance mechanosensitive channel (134 aa).

2 consecutive transmembrane segments (helical) span residues Val-16 to Leu-36 and Gly-81 to Val-101.

Belongs to the MscL family. In terms of assembly, homopentamer.

It is found in the cell inner membrane. In terms of biological role, channel that opens in response to stretch forces in the membrane lipid bilayer. May participate in the regulation of osmotic pressure changes within the cell. This chain is Large-conductance mechanosensitive channel, found in Xylella fastidiosa (strain 9a5c).